Here is an 824-residue protein sequence, read N- to C-terminus: Leucine--tRNA ligase (824 aa).

The short motif at 42–52 (PYPSGHLHMGH) is the 'HIGH' region element. Residues 581–585 (KMSKS) carry the 'KMSKS' region motif. Lys584 is an ATP binding site.

It belongs to the class-I aminoacyl-tRNA synthetase family.

The protein resides in the cytoplasm. It carries out the reaction tRNA(Leu) + L-leucine + ATP = L-leucyl-tRNA(Leu) + AMP + diphosphate. In Syntrophomonas wolfei subsp. wolfei (strain DSM 2245B / Goettingen), this protein is Leucine--tRNA ligase.